The chain runs to 243 residues: Tyrosine recombinase XerD-like (243 aa).

Residues Met-1–Tyr-72 form the Core-binding (CB) domain. In terms of domain architecture, Tyr recombinase spans Leu-85–Arg-243. Active-site residues include Lys-149 and Arg-210. Tyr-242 (O-(3'-phospho-DNA)-tyrosine intermediate) is an active-site residue.

This sequence belongs to the 'phage' integrase family. XerD-like subfamily.

Its subcellular location is the cytoplasm. Putative tyrosine recombinase. Not involved in the cutting and rejoining of the recombining DNA molecules on dif(SL) site. In Streptococcus sanguinis (strain SK36), this protein is Tyrosine recombinase XerD-like.